Consider the following 274-residue polypeptide: NADPH-dependent 7-cyano-7-deazaguanine reductase (274 aa).

Residue 80 to 82 participates in substrate binding; sequence VES. Position 82–83 (82–83) interacts with NADPH; it reads SK. The Thioimide intermediate role is filled by cysteine 181. Aspartate 188 functions as the Proton donor in the catalytic mechanism. 220 to 221 lines the substrate pocket; sequence HE. 249–250 contacts NADPH; sequence RG.

Belongs to the GTP cyclohydrolase I family. QueF type 2 subfamily. As to quaternary structure, homodimer.

It localises to the cytoplasm. It catalyses the reaction 7-aminomethyl-7-carbaguanine + 2 NADP(+) = 7-cyano-7-deazaguanine + 2 NADPH + 3 H(+). Its pathway is tRNA modification; tRNA-queuosine biosynthesis. Functionally, catalyzes the NADPH-dependent reduction of 7-cyano-7-deazaguanine (preQ0) to 7-aminomethyl-7-deazaguanine (preQ1). This chain is NADPH-dependent 7-cyano-7-deazaguanine reductase, found in Paraburkholderia phytofirmans (strain DSM 17436 / LMG 22146 / PsJN) (Burkholderia phytofirmans).